We begin with the raw amino-acid sequence, 300 residues long: Protoheme IX farnesyltransferase (300 aa).

The next 9 helical transmembrane spans lie at 24–44 (VTQLAVFCAVIGMFLATPGMV), 48–68 (VLIGGTVGIWLLAGAAFAINC), 94–114 (PQILLFSAVLGSIGAWTLYTF), 118–138 (LTMWLTIATFVGYAVIYTLLL), 146–166 (IVIGGASGAMPPALGWAAVTG), 172–192 (AWILVLIIFVWTPPHFWVLAL), 217–237 (LHILLYTVILFAVTLMPFISG), 239–259 (SGAVYLTSAVLLGAVFLAYAW), and 278–298 (IVYLSLLFAALLVDHYARPLL).

It belongs to the UbiA prenyltransferase family. Protoheme IX farnesyltransferase subfamily.

It localises to the cell inner membrane. The enzyme catalyses heme b + (2E,6E)-farnesyl diphosphate + H2O = Fe(II)-heme o + diphosphate. The protein operates within porphyrin-containing compound metabolism; heme O biosynthesis; heme O from protoheme: step 1/1. In terms of biological role, converts heme B (protoheme IX) to heme O by substitution of the vinyl group on carbon 2 of heme B porphyrin ring with a hydroxyethyl farnesyl side group. This is Protoheme IX farnesyltransferase from Burkholderia vietnamiensis (strain G4 / LMG 22486) (Burkholderia cepacia (strain R1808)).